Reading from the N-terminus, the 561-residue chain is MSTERTSWTSLSTIQKIALGLGIPASATVAYILYRRYRESREERLTFVGEDDIEIEMRVPQEAVKLIIGRQGANIKQLRKQTGARIDVDTEDVGDERVLLISGFPVQVCKAKAAIHQILTENTPVSEQLSVPQRSVGRIIGRGGETIRSICKASGAKITCDKESEGTLLLSRLIKISGTQKEVAAAKHLILEKVSEDEELRKRIAHSAETRVPRKQPISVRREDMTEPGGAGEPALWKNTSSSMEPTAPLVTPPPKGGGDMAVVVSKEGSWEKPSDDSFQKSEAQAIPEMPMFEIPSPDFSFHADEYLEVYVSASEHPNHFWIQIVGSRSLQLDKLVNEMTQHYENSVPEDLTVHVGDIVAAPLPTNGSWYRARVLGTLENGNLDLYFVDFGDNGDCPLKDLRALRSDFLSLPFQAIECSLARIAPSGDQWEEEALDEFDRLTHCADWKPLVAKISSYVQTGISTWPKIYLYDTSNGKKLDIGLELVHKGYAIELPEDIEENRAVPDMLKDMATETDASLSTLLTETKKSSGEITHTLSCLSLSEAASMSGDDNLEDDYLL.

2 consecutive KH domains span residues Asp52–Ile115 and Pro124–Ile190. Glycyl lysine isopeptide (Lys-Gly) (interchain with G-Cter in ubiquitin) cross-links involve residues Lys65, Lys76, Lys110, Lys112, Lys152, Lys175, Lys181, Lys187, Lys193, Lys256, and Lys267. The disordered stretch occupies residues Ser219–Ala262. Phosphoserine is present on Ser278. In terms of domain architecture, Tudor spans Thr353 to Leu412. Glycyl lysine isopeptide (Lys-Gly) (interchain with G-Cter in ubiquitin) cross-links involve residues Lys479, Lys510, and Lys529.

This sequence belongs to the Tdrkh family. As to quaternary structure, interacts with (symmetrically methylated) PIWIL1, PIWIL2 and PIWIL4. Post-translationally, ubiquitinated by PRKN during mitophagy, leading to its degradation and enhancement of mitophagy. Deubiquitinated by USP30.

Its subcellular location is the cytoplasm. The protein resides in the mitochondrion. Functionally, participates in the primary piRNA biogenesis pathway and is required during spermatogenesis to repress transposable elements and prevent their mobilization, which is essential for the germline integrity. The piRNA metabolic process mediates the repression of transposable elements during meiosis by forming complexes composed of piRNAs and Piwi proteins and govern the methylation and subsequent repression of transposons. Required for the final steps of primary piRNA biogenesis by participating in the processing of 31-37 nt intermediates into mature piRNAs. May act in pi-bodies and piP-bodies by transferring piRNA precursors or intermediates to or between these granules. In Homo sapiens (Human), this protein is Tudor and KH domain-containing protein (TDRKH).